The primary structure comprises 337 residues: Probable uridine nucleosidase 2 (337 aa).

His-260 is an active-site residue.

It belongs to the IUNH family.

Its subcellular location is the cytoplasm. It carries out the reaction uridine + H2O = D-ribose + uracil. Its function is as follows. Involved in pyrimidine breakdown. The protein is Probable uridine nucleosidase 2 (URH2) of Oryza sativa subsp. japonica (Rice).